The chain runs to 473 residues: Zinc finger and SCAN domain-containing protein 21 (473 aa).

A Glycyl lysine isopeptide (Lys-Gly) (interchain with G-Cter in SUMO2) cross-link involves residue lysine 27. The region spanning 45 to 127 (RQRFRQFGYH…TLLEDLEREL (83 aa)) is the SCAN box domain. The interval 127-171 (LDEPGHQVSTPPNEQKPVWEKISSSGTAKESPSSMQPQPLETSHN) is disordered. The segment covering 148–171 (ISSSGTAKESPSSMQPQPLETSHN) has biased composition (polar residues). Residues lysine 221 and lysine 232 each participate in a glycyl lysine isopeptide (Lys-Gly) (interchain with G-Cter in SUMO2) cross-link. A disordered region spans residues 244 to 272 (LENEKGTKPPLQEAGSKKGRESVPTKPTP). Residues 258–272 (GSKKGRESVPTKPTP) are compositionally biased toward basic and acidic residues. 7 consecutive C2H2-type zinc fingers follow at residues 277–299 (YICAECGKAFSNSSNLTKHRRTH), 305–327 (YVCTKCGKAFSHSSNLTLHYRTH), 333–354 (YDCKCGKAFGQSSDLLKHQRMH), 360–382 (YQCKDCGKAFSGKGSLIRHYRIH), 388–410 (YQCNECGKSFSQHAGLSSHQRLH), 416–438 (YKCKECGKAFNHSSNFNKHHRIH), and 444–466 (YWCHHCGKTFCSKSNLSKHQRVH). Lysine 349 participates in a covalent cross-link: Glycyl lysine isopeptide (Lys-Gly) (interchain with G-Cter in SUMO2).

Belongs to the krueppel C2H2-type zinc-finger protein family.

It is found in the nucleus. In terms of biological role, strong transcriptional activator. Plays an important role in spermatogenesis; essential for the progression of meiotic prophase I in spermatocytes. The sequence is that of Zinc finger and SCAN domain-containing protein 21 (ZSCAN21) from Gorilla gorilla gorilla (Western lowland gorilla).